Reading from the N-terminus, the 89-residue chain is MPRTVFCQYEQRDAEGLDFVPYPGELGQRIFNNIGKQAWAAWLAHQTMLINENRLSPRTPEHRAFLEGELVKFLFEKDAQKPAGFTPEA.

The protein belongs to the Fe(2+)-trafficking protein family.

Its function is as follows. Could be a mediator in iron transactions between iron acquisition and iron-requiring processes, such as synthesis and/or repair of Fe-S clusters in biosynthetic enzymes. The polypeptide is Probable Fe(2+)-trafficking protein (Stenotrophomonas maltophilia (strain K279a)).